The following is a 337-amino-acid chain: Delta-aminolevulinic acid dehydratase (337 aa).

Lys-205 serves as the catalytic Schiff-base intermediate with substrate. Arg-215 and Lys-229 together coordinate 5-aminolevulinate. Glu-245 lines the Mg(2+) pocket. The Schiff-base intermediate with substrate role is filled by Lys-260. 5-aminolevulinate is bound by residues Ser-286 and Tyr-324.

The protein belongs to the ALAD family. Homooctamer; formed by oligomerization of dimers. It depends on Mg(2+) as a cofactor.

It catalyses the reaction 2 5-aminolevulinate = porphobilinogen + 2 H2O + H(+). The protein operates within porphyrin-containing compound metabolism; protoporphyrin-IX biosynthesis; coproporphyrinogen-III from 5-aminolevulinate: step 1/4. Stimulated by magnesium ions. Functionally, catalyzes an early step in the biosynthesis of tetrapyrroles. Binds two molecules of 5-aminolevulinate per subunit, each at a distinct site, and catalyzes their condensation to form porphobilinogen. This is Delta-aminolevulinic acid dehydratase (hemB) from Pseudomonas aeruginosa (strain ATCC 15692 / DSM 22644 / CIP 104116 / JCM 14847 / LMG 12228 / 1C / PRS 101 / PAO1).